Consider the following 95-residue polypeptide: Aspartyl/glutamyl-tRNA(Asn/Gln) amidotransferase subunit C (95 aa).

This sequence belongs to the GatC family. Heterotrimer of A, B and C subunits.

The enzyme catalyses L-glutamyl-tRNA(Gln) + L-glutamine + ATP + H2O = L-glutaminyl-tRNA(Gln) + L-glutamate + ADP + phosphate + H(+). It carries out the reaction L-aspartyl-tRNA(Asn) + L-glutamine + ATP + H2O = L-asparaginyl-tRNA(Asn) + L-glutamate + ADP + phosphate + 2 H(+). Allows the formation of correctly charged Asn-tRNA(Asn) or Gln-tRNA(Gln) through the transamidation of misacylated Asp-tRNA(Asn) or Glu-tRNA(Gln) in organisms which lack either or both of asparaginyl-tRNA or glutaminyl-tRNA synthetases. The reaction takes place in the presence of glutamine and ATP through an activated phospho-Asp-tRNA(Asn) or phospho-Glu-tRNA(Gln). This chain is Aspartyl/glutamyl-tRNA(Asn/Gln) amidotransferase subunit C, found in Bartonella bacilliformis (strain ATCC 35685 / KC583 / Herrer 020/F12,63).